Here is a 253-residue protein sequence, read N- to C-terminus: Ribosome-inactivating protein saporin-7 (253 aa).

Residue E176 is part of the active site.

The protein belongs to the ribosome-inactivating protein family. Type 1 RIP subfamily.

It catalyses the reaction Endohydrolysis of the N-glycosidic bond at one specific adenosine on the 28S rRNA.. Functionally, ribosome-inactivating protein of type 1, inhibits protein synthesis in animal cells. The chain is Ribosome-inactivating protein saporin-7 (SAP7) from Saponaria officinalis (Common soapwort).